A 296-amino-acid chain; its full sequence is GTPase Era (296 aa).

In terms of domain architecture, Era-type G spans 7 to 174; sequence KCSMSAIVGT…VDYLCETSPY (168 aa). The interval 15–22 is G1; that stretch reads GTTNAGKS. Residue 15-22 coordinates GTP; the sequence is GTTNAGKS. Residues 41-45 form a G2 region; that stretch reads QTTRV. A G3 region spans residues 62–65; sequence DTPG. Residues 62–66 and 124–127 contribute to the GTP site; these read DTPGI and NKID. The interval 124-127 is G4; the sequence is NKID. Residues 153 to 155 are G5; that stretch reads ISA. In terms of domain architecture, KH type-2 spans 205–282; the sequence is LRHELPYSLS…HLFLFVKVRE (78 aa).

The protein belongs to the TRAFAC class TrmE-Era-EngA-EngB-Septin-like GTPase superfamily. Era GTPase family. Monomer.

It localises to the cytoplasm. Its subcellular location is the cell inner membrane. In terms of biological role, an essential GTPase that binds both GDP and GTP, with rapid nucleotide exchange. Plays a role in 16S rRNA processing and 30S ribosomal subunit biogenesis and possibly also in cell cycle regulation and energy metabolism. This Ehrlichia ruminantium (strain Gardel) protein is GTPase Era.